The sequence spans 565 residues: Carboxylesterase 1D (565 aa).

The N-terminal stretch at 1 to 18 (MRLYPLVWLFLAACTAWG) is a signal peptide. N-linked (GlcNAc...) asparagine glycosylation occurs at Asn79. Residues Cys87 and Cys116 are joined by a disulfide bond. The active-site Acyl-ester intermediate is the Ser221. An intrachain disulfide couples Cys273 to Cys284. The active-site Charge relay system is Glu353. An N6-succinyllysine modification is found at Lys382. His466 serves as the catalytic Charge relay system. Residue Asn489 is glycosylated (N-linked (GlcNAc...) asparagine). A Prevents secretion from ER motif is present at residues 562–565 (HVEL).

Belongs to the type-B carboxylesterase/lipase family. Homotrimer. Detected in liver, lung and testis, but not in kidney (at protein level).

It localises to the endoplasmic reticulum lumen. It is found in the cytoplasm. The protein resides in the cytosol. Its subcellular location is the lipid droplet. The protein localises to the microsome. The enzyme catalyses all-trans-retinyl hexadecanoate + H2O = all-trans-retinol + hexadecanoate + H(+). It carries out the reaction a carboxylic ester + H2O = an alcohol + a carboxylate + H(+). The catalysed reaction is a long-chain fatty acyl ethyl ester + H2O = a long-chain fatty acid + ethanol + H(+). FAEE-synthesizing and PNPB-hydrolyzing activities are both inhibited by DFP. In terms of biological role, major lipase in white adipose tissue. Involved in the metabolism of xenobiotics and of natural substrates. Hydrolyzes triacylglycerols and monoacylglycerols, with a preference for monoacylglycerols. The susceptibility of the substrate increases with decreasing acyl chain length of the fatty acid moiety. Catalyzes the synthesis of fatty acid ethyl esters. Hydrolyzes retinyl esters. The protein is Carboxylesterase 1D of Rattus norvegicus (Rat).